A 559-amino-acid chain; its full sequence is NXPE family member 3 (559 aa).

The first 30 residues, 1-30 (MWTNFFKLRLFCCLLAVLMVVVLVVNVTQV), serve as a signal peptide directing secretion. Asn26, Asn237, and Asn346 each carry an N-linked (GlcNAc...) asparagine glycan.

This sequence belongs to the NXPE family.

The protein resides in the secreted. In Pongo abelii (Sumatran orangutan), this protein is NXPE family member 3 (NXPE3).